A 524-amino-acid chain; its full sequence is MSQLSLSWLGLGPEVAFPWKTLLLLGASWILARILIQIYAAYRNYRHLHGFPQPPKRNWLMGHVGMVTPTEQGLKELTRLVGTYPQGFLMWIGPMVPVITLCHSDIVRSILNASAAVALKDVIFYSILKPWLGDGLLVSAGDKWSRHRRMLTPAFHFNILKPYVKIFNDSTNIMHAKWQRLISDGSARLDMFEHVSLMTLDSLQKCVFSFDSNCQEKSSEYIAAILELSALVAKRHQQPLMFMDLLYNLTPDGMRFRKACNVVHEFTDAVIRERHRTLPDQGLDDFLKSKAKSKTLDFIDVLLLSKDEDGKELSDEDIRAEADTFMFEGHDTTASGLSWILYNLARHPEYQERCRQEVQELLRGREPEEIEWDDLAQLPFLTMCIKESLRLHPPVTVISRCCTQDILLPDGRTIPKGIICLISIFGIHHNPSVWPDPEVYDPFRFDPENIKDSSPLAFIPFSAGPRNCIGQTFAMSEMKVALALTLLRFRLLPDDKEPRRQPELILRAEGGLWLRVEPLSAGAH.

Heme contacts are provided by Glu-328 and Cys-468.

It belongs to the cytochrome P450 family. Heme serves as cofactor.

The protein localises to the endoplasmic reticulum membrane. Its subcellular location is the microsome membrane. The catalysed reaction is leukotriene B4 + reduced [NADPH--hemoprotein reductase] + O2 = 20-hydroxy-leukotriene B4 + oxidized [NADPH--hemoprotein reductase] + H2O + H(+). Its pathway is lipid metabolism; leukotriene B4 degradation. Functionally, cytochromes P450 are a group of heme-thiolate monooxygenases. Catalyzes the omega-hydroxylation of LTB4. This is Leukotriene-B4 omega-hydroxylase 3 (Cyp4f14) from Mus musculus (Mouse).